Here is a 170-residue protein sequence, read N- to C-terminus: Small ribosomal subunit protein eS7 (170 aa).

It belongs to the eukaryotic ribosomal protein eS7 family. Component of the small ribosomal subunit.

It localises to the cytoplasm. This is Small ribosomal subunit protein eS7 (RPS7) from Encephalitozoon cuniculi (strain GB-M1) (Microsporidian parasite).